A 364-amino-acid chain; its full sequence is Protein leg1b (364 aa).

An N-terminal signal peptide occupies residues 1 to 22 (MSEMGFLRSVAAVLLLAVFSHA). Residue N70 is glycosylated (N-linked (GlcNAc...) asparagine).

It belongs to the LEG1 family. Detected in all tissues tested, with the highest levels in serum (at protein level). At mRNA level, only expressed in liver.

The protein resides in the secreted. Functionally, involved in early development of liver, exocrine pancreas and intestine, probably through cell cycle regulation. In liver, its function is partially redundant with leg1a function. This chain is Protein leg1b, found in Danio rerio (Zebrafish).